We begin with the raw amino-acid sequence, 436 residues long: GTPase Der (436 aa).

EngA-type G domains follow at residues proline 4–leucine 167 and isoleucine 175–asparagine 351. Residues glycine 10–serine 17, aspartate 57–isoleucine 61, asparagine 119–aspartate 122, glycine 181–serine 188, aspartate 229–isoleucine 233, and asparagine 294–aspartate 297 each bind GTP. Residues arginine 352 to lysine 436 form the KH-like domain.

Belongs to the TRAFAC class TrmE-Era-EngA-EngB-Septin-like GTPase superfamily. EngA (Der) GTPase family. In terms of assembly, associates with the 50S ribosomal subunit.

GTPase that plays an essential role in the late steps of ribosome biogenesis. This chain is GTPase Der, found in Latilactobacillus sakei subsp. sakei (strain 23K) (Lactobacillus sakei subsp. sakei).